We begin with the raw amino-acid sequence, 508 residues long: Light-independent protochlorophyllide reductase subunit B (508 aa).

D36 contributes to the [4Fe-4S] cluster binding site. D294 (proton donor) is an active-site residue. Residue 429–430 (GM) coordinates substrate.

Belongs to the ChlB/BchB/BchZ family. As to quaternary structure, protochlorophyllide reductase is composed of three subunits; ChlL, ChlN and ChlB. Forms a heterotetramer of two ChlB and two ChlN subunits. Requires [4Fe-4S] cluster as cofactor.

It carries out the reaction chlorophyllide a + oxidized 2[4Fe-4S]-[ferredoxin] + 2 ADP + 2 phosphate = protochlorophyllide a + reduced 2[4Fe-4S]-[ferredoxin] + 2 ATP + 2 H2O. Its pathway is porphyrin-containing compound metabolism; chlorophyll biosynthesis (light-independent). In terms of biological role, component of the dark-operative protochlorophyllide reductase (DPOR) that uses Mg-ATP and reduced ferredoxin to reduce ring D of protochlorophyllide (Pchlide) to form chlorophyllide a (Chlide). This reaction is light-independent. The NB-protein (ChlN-ChlB) is the catalytic component of the complex. The sequence is that of Light-independent protochlorophyllide reductase subunit B from Trichormus variabilis (strain ATCC 29413 / PCC 7937) (Anabaena variabilis).